The primary structure comprises 431 residues: tRNA-specific 2-thiouridylase MnmA (431 aa).

ATP contacts are provided by residues 35–42 (AMSGGVDS) and Leu-61. Cys-129 serves as the catalytic Nucleophile. The cysteines at positions 129 and 226 are disulfide-linked. Gly-153 provides a ligand contact to ATP. Residues 176 to 178 (RDQ) form an interaction with tRNA region. Cys-226 acts as the Cysteine persulfide intermediate in catalysis. Residues 407–431 (PKPPNEDLLDTNESSDLVSPKRSAC) are disordered.

It belongs to the MnmA/TRMU family.

It is found in the cytoplasm. The enzyme catalyses S-sulfanyl-L-cysteinyl-[protein] + uridine(34) in tRNA + AH2 + ATP = 2-thiouridine(34) in tRNA + L-cysteinyl-[protein] + A + AMP + diphosphate + H(+). Its function is as follows. Catalyzes the 2-thiolation of uridine at the wobble position (U34) of tRNA, leading to the formation of s(2)U34. The chain is tRNA-specific 2-thiouridylase MnmA from Beijerinckia indica subsp. indica (strain ATCC 9039 / DSM 1715 / NCIMB 8712).